The primary structure comprises 468 residues: Argininosuccinate lyase (468 aa).

Belongs to the lyase 1 family. Argininosuccinate lyase subfamily.

The protein localises to the cytoplasm. It catalyses the reaction 2-(N(omega)-L-arginino)succinate = fumarate + L-arginine. The protein operates within amino-acid biosynthesis; L-arginine biosynthesis; L-arginine from L-ornithine and carbamoyl phosphate: step 3/3. This is Argininosuccinate lyase from Cutibacterium acnes (strain DSM 16379 / KPA171202) (Propionibacterium acnes).